Consider the following 120-residue polypeptide: Secreted effector PIT2 (120 aa).

An N-terminal signal peptide occupies residues Met-1 to Ala-25. The interval Lys-46–Leu-59 is PID14 protease inhibitor domain.

As to quaternary structure, interacts with host cysteine proteases CP1A, CP1B, XCP2 and CP2. In terms of processing, cleaved by host target papain-like cysteine proteases (PLCPs) to release the embedded inhibitor peptide PID14.

The protein localises to the secreted. Secreted effector required for virulence. Functions as an inhibitor of a set of apoplastic maize papain-like cysteine proteases (PLCPs) including CP1A, CP1B, XCP2 and CP2, whose activity is directly linked with salicylic-acid-associated plant defenses. Acts as a substrate mimicking molecule for apoplastic PLCPs and its processing releases the embedded inhibitor peptide PID14, which in turn blocks PLCPs to modulate host immunity. This Mycosarcoma maydis (Corn smut fungus) protein is Secreted effector PIT2.